Here is a 349-residue protein sequence, read N- to C-terminus: Isopentenyl-diphosphate delta-isomerase (349 aa).

8-9 (RK) serves as a coordination point for substrate. Residues Ser66, 67–69 (SMT), Ser97, and Asn125 each bind FMN. A substrate-binding site is contributed by 97–99 (STR). Substrate is bound at residue Gln160. Residue Glu161 coordinates Mg(2+). Residues Lys192, Thr222, 272-274 (GMK), and 293-294 (AR) each bind FMN.

The protein belongs to the IPP isomerase type 2 family. Homooctamer. Dimer of tetramers. FMN is required as a cofactor. NADPH serves as cofactor. The cofactor is Mg(2+).

It localises to the cytoplasm. The catalysed reaction is isopentenyl diphosphate = dimethylallyl diphosphate. In terms of biological role, involved in the biosynthesis of isoprenoids. Catalyzes the 1,3-allylic rearrangement of the homoallylic substrate isopentenyl (IPP) to its allylic isomer, dimethylallyl diphosphate (DMAPP). This Oceanobacillus iheyensis (strain DSM 14371 / CIP 107618 / JCM 11309 / KCTC 3954 / HTE831) protein is Isopentenyl-diphosphate delta-isomerase.